Reading from the N-terminus, the 845-residue chain is Beta-glucosidase B (845 aa).

An N-linked (GlcNAc...) asparagine glycan is attached at N202. The active site involves D230. N-linked (GlcNAc...) asparagine glycosylation is present at N235. The 152-residue stretch at 406–557 folds into the PA14 domain; the sequence is EGQPGWTLDF…HNRDLLSEAV (152 aa). N-linked (GlcNAc...) asparagine glycans are attached at residues N591, N612, and N794.

This sequence belongs to the glycosyl hydrolase 3 family.

It catalyses the reaction Hydrolysis of terminal, non-reducing beta-D-glucosyl residues with release of beta-D-glucose.. It functions in the pathway glycan metabolism; cellulose degradation. Beta-glucosidases are one of a number of cellulolytic enzymes involved in the degradation of cellulosic biomass. Catalyzes the last step releasing glucose from the inhibitory cellobiose. The sequence is that of Beta-glucosidase B (bglB) from Emericella nidulans (strain FGSC A4 / ATCC 38163 / CBS 112.46 / NRRL 194 / M139) (Aspergillus nidulans).